A 69-amino-acid polypeptide reads, in one-letter code: Large ribosomal subunit protein bL31 (69 aa).

The Zn(2+) site is built by C16, C18, C36, and C39.

The protein belongs to the bacterial ribosomal protein bL31 family. Type A subfamily. As to quaternary structure, part of the 50S ribosomal subunit. The cofactor is Zn(2+).

In terms of biological role, binds the 23S rRNA. The protein is Large ribosomal subunit protein bL31 of Ruminiclostridium cellulolyticum (strain ATCC 35319 / DSM 5812 / JCM 6584 / H10) (Clostridium cellulolyticum).